Consider the following 53-residue polypeptide: Kunitz-type trypsin inhibitor alpha chain (53 aa).

A disordered region spans residues 33 to 53 (GWGLPRRTGDESCPLNVKAVR).

It belongs to the protease inhibitor I3 (leguminous Kunitz-type inhibitor) family. In terms of assembly, heterodimer of an alpha and a beta chain linked by a disulfide bond.

In terms of biological role, inhibits trypsin with a Ki of 0.25 uM. Inhibits the trypsin-like proteases in midguts of larval H.armigera, S.exigua, and P.rapae. This Albizia kalkora (Kalkora mimosa) protein is Kunitz-type trypsin inhibitor alpha chain.